We begin with the raw amino-acid sequence, 134 residues long: Small ribosomal subunit protein uS9 (134 aa).

The interval 97 to 134 (ENRQDLKSCGFLTRDPRKKERKKYGHKKARKSFQFSKR) is disordered. A compositionally biased stretch (basic residues) spans 115–134 (KERKKYGHKKARKSFQFSKR).

Belongs to the universal ribosomal protein uS9 family.

This Chlamydia pneumoniae (Chlamydophila pneumoniae) protein is Small ribosomal subunit protein uS9 (rpsI).